The sequence spans 196 residues: Pyroglutamyl-peptidase 1-like protein (196 aa).

Catalysis depends on residues glutamate 65, cysteine 127, and histidine 146.

It belongs to the peptidase C15 family.

The protein is Pyroglutamyl-peptidase 1-like protein (PGPEP1L) of Homo sapiens (Human).